Reading from the N-terminus, the 63-residue chain is DNA gyrase inhibitor YacG (63 aa).

Zn(2+)-binding residues include C10, C13, C29, and C33.

Belongs to the DNA gyrase inhibitor YacG family. Interacts with GyrB. Zn(2+) is required as a cofactor.

Its function is as follows. Inhibits all the catalytic activities of DNA gyrase by preventing its interaction with DNA. Acts by binding directly to the C-terminal domain of GyrB, which probably disrupts DNA binding by the gyrase. This Chromobacterium violaceum (strain ATCC 12472 / DSM 30191 / JCM 1249 / CCUG 213 / NBRC 12614 / NCIMB 9131 / NCTC 9757 / MK) protein is DNA gyrase inhibitor YacG.